The chain runs to 225 residues: MRYRCPMNCPSLRNQEYRREIMISEQLMGRGIRDPAVLAAMRQVPREAFVDQGMRELAYEDHPLPIDGGQTISQPYIVAYMTEALELSSSDRVLEIGTGSGYAAAVLSRIVHTVYSVERLEELARGARQRLESLGYNNVEVFEGDGTLGWPEHAPYDAIVVTAGAPAVPKPLLRQLVVGGRLVIPVGASSFLQNLIRVRRQGEDDYRSEELCGVRFVPLVGAEGW.

The active site involves Ser73.

Belongs to the methyltransferase superfamily. L-isoaspartyl/D-aspartyl protein methyltransferase family.

It localises to the cytoplasm. The catalysed reaction is [protein]-L-isoaspartate + S-adenosyl-L-methionine = [protein]-L-isoaspartate alpha-methyl ester + S-adenosyl-L-homocysteine. Catalyzes the methyl esterification of L-isoaspartyl residues in peptides and proteins that result from spontaneous decomposition of normal L-aspartyl and L-asparaginyl residues. It plays a role in the repair and/or degradation of damaged proteins. In Pelobacter propionicus (strain DSM 2379 / NBRC 103807 / OttBd1), this protein is Protein-L-isoaspartate O-methyltransferase 2.